Here is a 343-residue protein sequence, read N- to C-terminus: Ribosomal RNA small subunit methyltransferase C (343 aa).

The protein belongs to the methyltransferase superfamily. RsmC family. As to quaternary structure, monomer.

The protein resides in the cytoplasm. The enzyme catalyses guanosine(1207) in 16S rRNA + S-adenosyl-L-methionine = N(2)-methylguanosine(1207) in 16S rRNA + S-adenosyl-L-homocysteine + H(+). In terms of biological role, specifically methylates the guanine in position 1207 of 16S rRNA in the 30S particle. This Escherichia coli (strain 55989 / EAEC) protein is Ribosomal RNA small subunit methyltransferase C.